The sequence spans 214 residues: Small ribosomal subunit protein uS2 (214 aa).

Belongs to the universal ribosomal protein uS2 family.

The protein is Small ribosomal subunit protein uS2 of Thermofilum pendens (strain DSM 2475 / Hrk 5).